A 226-amino-acid chain; its full sequence is Thymidylate kinase (226 aa).

9–16 (GPEGSGKS) serves as a coordination point for ATP.

The protein belongs to the thymidylate kinase family.

The enzyme catalyses dTMP + ATP = dTDP + ADP. Its function is as follows. Phosphorylation of dTMP to form dTDP in both de novo and salvage pathways of dTTP synthesis. This is Thymidylate kinase from Roseiflexus sp. (strain RS-1).